A 606-amino-acid polypeptide reads, in one-letter code: MNIKASRIKELETLCKNIREEILRVVSKNGGHLSSTLGATEIIVAMHEVFDSKKDPFIFDVSHQSYAHKLLTGRWDKFDTLREFNGLCGYTKPSESEHDYFVAGHSSTSISLGVGAAKAIALKGEQNSRIPVIMIGDGSMTAGMVYEALNELGERKYPMVIILNDNEMSISKPIGAISRILSSAMASPFYQNFKKHTENFVDNFGDGARYIAKRMEESLKLITPGIMFEEMGIDYIGPVDGHNIASLIEILQKAKELKKPVIVHAQTLKGKGYEIAEGKDEKWHGVGPFDLDSGAASKKSSAKSATQIYAEALLHLAKNNDKIVGATAAMPSGTGLSELIELYPNRFWDVAIAEQHAVTSMAALAKEGFKPFCTIYSTFLQRGYDQVIHDTCLMNLPVVFALDRAGIVGEDGETHQGVFDVSFLRAIPNMTLFAPRDEKSFHQAMAFAAQYQFPCSLRYPRGSFTQTSLPESSPFELAKSQLLQSNKGDVLFIGYGNGVGRAYETSKLLEEKISILDLRFIKPLDKEMLRDMATKHNKWFIFSDSAKMGGVGSAILEFFADEKILHVELESFEYEDSFITHGKTKDVEESLGLLPAQLAQKVKALI.

Residues histidine 63 and 104–106 (GHS) each bind thiamine diphosphate. Aspartate 137 provides a ligand contact to Mg(2+). Thiamine diphosphate contacts are provided by residues 138 to 139 (GS), asparagine 166, tyrosine 273, and glutamate 354. Asparagine 166 contacts Mg(2+).

The protein belongs to the transketolase family. DXPS subfamily. As to quaternary structure, homodimer. The cofactor is Mg(2+). Thiamine diphosphate serves as cofactor.

It carries out the reaction D-glyceraldehyde 3-phosphate + pyruvate + H(+) = 1-deoxy-D-xylulose 5-phosphate + CO2. It functions in the pathway metabolic intermediate biosynthesis; 1-deoxy-D-xylulose 5-phosphate biosynthesis; 1-deoxy-D-xylulose 5-phosphate from D-glyceraldehyde 3-phosphate and pyruvate: step 1/1. Functionally, catalyzes the acyloin condensation reaction between C atoms 2 and 3 of pyruvate and glyceraldehyde 3-phosphate to yield 1-deoxy-D-xylulose-5-phosphate (DXP). The chain is 1-deoxy-D-xylulose-5-phosphate synthase from Sulfurimonas denitrificans (strain ATCC 33889 / DSM 1251) (Thiomicrospira denitrificans (strain ATCC 33889 / DSM 1251)).